Reading from the N-terminus, the 315-residue chain is DNA-directed RNA polymerase subunit alpha (315 aa).

The segment at 1 to 228 is alpha N-terminal domain (alpha-NTD); sequence MLEIEKPKIE…EHFKLFMTLT (228 aa). The tract at residues 245–315 is alpha C-terminal domain (alpha-CTD); sequence KEKVLEMAIE…LGLSLKQNED (71 aa).

Belongs to the RNA polymerase alpha chain family. Homodimer. The RNAP catalytic core consists of 2 alpha, 1 beta, 1 beta' and 1 omega subunit. When a sigma factor is associated with the core the holoenzyme is formed, which can initiate transcription.

The catalysed reaction is RNA(n) + a ribonucleoside 5'-triphosphate = RNA(n+1) + diphosphate. Its function is as follows. DNA-dependent RNA polymerase catalyzes the transcription of DNA into RNA using the four ribonucleoside triphosphates as substrates. In Clostridium kluyveri (strain NBRC 12016), this protein is DNA-directed RNA polymerase subunit alpha.